A 283-amino-acid polypeptide reads, in one-letter code: MRCSAVSLGSGTIINAIATGFGSAFGVDLKIKADVELVDNCKKIINGISIDNPTLKPSLVERCVKNVLDHFEVDYSAKISTSGDIPIKSGLSSSSAASNAAVLATIGALGEKVDSDLVLDLAIKSSFEEKLTITGAYDDATASYFGGITVCNNMERKILKKDEFKEDIKVIVLMPEFQKNVDVNRMKLIKDYVEIAFEKCMEGDYYKALFLNGLLYSSALNFPSNISVDALEAGAITAGLSGTGPSYVALCYSEDKKNVENALKKYGNTVITKPSTNGARILY.

An ATP-binding site is contributed by 86–96 (PIKSGLSSSSA).

Belongs to the GHMP kinase family. Archaeal shikimate kinase subfamily.

Its subcellular location is the cytoplasm. It catalyses the reaction shikimate + ATP = 3-phosphoshikimate + ADP + H(+). Its pathway is metabolic intermediate biosynthesis; chorismate biosynthesis; chorismate from D-erythrose 4-phosphate and phosphoenolpyruvate: step 5/7. The protein is Shikimate kinase of Methanococcus maripaludis (strain C5 / ATCC BAA-1333).